The chain runs to 445 residues: Cyclic GMP-AMP synthase-like receptor 1 (445 aa).

Glutamate 70, aspartate 72, and aspartate 186 together coordinate Mg(2+). 70-72 is a binding site for ATP; that stretch reads EYD. GTP-binding positions include aspartate 186 and 232 to 239; that span reads RTSFYEAE. ATP contacts are provided by residues 236-239, lysine 257, and 270-274; these read YEAE and SYHIK. The tract at residues 357 to 445 is disordered; sequence LNDDNENSVH…KSKTTTPKPS (89 aa). Basic and acidic residues predominate over residues 377–398; sequence QKMEKTSTESEQKKPTETKPNA. The span at 435–445 shows a compositional bias: low complexity; sequence TKSKTTTPKPS.

This sequence belongs to the mab-21 family. The cofactor is Mg(2+). Mn(2+) serves as cofactor.

The catalysed reaction is GTP + ATP = 3',2'-cGAMP + 2 diphosphate. It carries out the reaction GTP + ATP = pppA(2'-5')pG + diphosphate. The enzyme catalyses pppA(2'-5')pG = 3',2'-cGAMP + diphosphate. With respect to regulation, the enzyme activity is specifically activated by double-stranded RNA (dsRNA). Its function is as follows. Nucleotidyltransferase that catalyzes the formation of cyclic GMP-AMP (3',2'-cGAMP) from ATP and GTP and plays a key role in innate immunity. Synthesizes 3',2'-cGAMP in a two-step reaction through production of the linear intermediate pppA(2'-5')pG. Acts as a key sensor of double-stranded RNA (dsRNA), the presence of dsRNA in the cytoplasm being a danger signal that triggers the immune responses. Directly binds dsRNA, activating the nucleotidyltransferase activity, leading to synthesis of 3',2'-cGAMP, a second messenger that binds to and activates Sting, thereby triggering the antiviral immune response via activation of the NF-kappa-B transcription factor Rel (Relish). The protein is Cyclic GMP-AMP synthase-like receptor 1 of Drosophila erecta (Fruit fly).